Consider the following 184-residue polypeptide: Thymidine kinase (184 aa).

Residues 10–17 (GPMYSGKT) and 83–86 (DEVQ) contribute to the ATP site. The active-site Proton acceptor is the E84. Residues C140, C143, C173, and C176 each coordinate Zn(2+).

Belongs to the thymidine kinase family. Homotetramer.

It localises to the cytoplasm. The enzyme catalyses thymidine + ATP = dTMP + ADP + H(+). This Thermotoga sp. (strain RQ2) protein is Thymidine kinase.